A 181-amino-acid chain; its full sequence is uncharacterized protein (181 aa).

This sequence to M.jannaschii MJ1106.

This is an uncharacterized protein from Methanothermobacter thermautotrophicus (strain ATCC 29096 / DSM 1053 / JCM 10044 / NBRC 100330 / Delta H) (Methanobacterium thermoautotrophicum).